The chain runs to 217 residues: Cytidylate kinase (217 aa).

10–18 (GPAGAGKST) contributes to the ATP binding site.

The protein belongs to the cytidylate kinase family. Type 1 subfamily.

The protein resides in the cytoplasm. It carries out the reaction CMP + ATP = CDP + ADP. It catalyses the reaction dCMP + ATP = dCDP + ADP. The chain is Cytidylate kinase from Clostridium botulinum (strain Loch Maree / Type A3).